Reading from the N-terminus, the 299-residue chain is Diaminopimelate epimerase (299 aa).

Substrate is bound by residues Asn13, Gln46, and Asn66. Cys75 (proton donor) is an active-site residue. Substrate-binding positions include Gly76–Asn77, Asn166, Asn199, and Glu217–Arg218. The Proton acceptor role is filled by Cys226. Position 227–228 (Gly227–Thr228) interacts with substrate.

The protein belongs to the diaminopimelate epimerase family. In terms of assembly, homodimer.

It localises to the cytoplasm. The catalysed reaction is (2S,6S)-2,6-diaminopimelate = meso-2,6-diaminopimelate. It functions in the pathway amino-acid biosynthesis; L-lysine biosynthesis via DAP pathway; DL-2,6-diaminopimelate from LL-2,6-diaminopimelate: step 1/1. In terms of biological role, catalyzes the stereoinversion of LL-2,6-diaminopimelate (L,L-DAP) to meso-diaminopimelate (meso-DAP), a precursor of L-lysine and an essential component of the bacterial peptidoglycan. This is Diaminopimelate epimerase from Paraburkholderia phytofirmans (strain DSM 17436 / LMG 22146 / PsJN) (Burkholderia phytofirmans).